Consider the following 265-residue polypeptide: Dimethylsulfide dehydrogenase subunit gamma (265 aa).

The signal sequence occupies residues 1–25 (MPGFRFLLAATAAFLATSPALPLSA). Heme b is bound by residues histidine 81 and methionine 147.

As to quaternary structure, heterotrimer of alpha, beta and gamma subunits. It depends on heme b as a cofactor.

The protein resides in the periplasm. Its function is as follows. May transfer electrons to the iron-sulfur centers of DdhB. This is Dimethylsulfide dehydrogenase subunit gamma (ddhC) from Rhodovulum sulfidophilum (Rhodobacter sulfidophilus).